The primary structure comprises 295 residues: Glutamyl-Q tRNA(Asp) synthetase (295 aa).

L-glutamate contacts are provided by residues Arg-5–Ser-9 and Glu-41. The short motif at Pro-8–Ser-18 is the 'HIGH' region element. Cys-97, Cys-99, Tyr-117, and Cys-121 together coordinate Zn(2+). L-glutamate is bound by residues Tyr-178 and Arg-196. The short motif at Lys-234 to Gln-238 is the 'KMSKS' region element. Lys-237 lines the ATP pocket.

It belongs to the class-I aminoacyl-tRNA synthetase family. GluQ subfamily. The cofactor is Zn(2+).

Catalyzes the tRNA-independent activation of glutamate in presence of ATP and the subsequent transfer of glutamate onto a tRNA(Asp). Glutamate is transferred on the 2-amino-5-(4,5-dihydroxy-2-cyclopenten-1-yl) moiety of the queuosine in the wobble position of the QUC anticodon. The chain is Glutamyl-Q tRNA(Asp) synthetase from Neisseria meningitidis serogroup C / serotype 2a (strain ATCC 700532 / DSM 15464 / FAM18).